We begin with the raw amino-acid sequence, 266 residues long: Small ribosomal subunit protein eS1 (266 aa).

Positions 235–266 (GGAGGAAKASGDDTGAKVERADGYEPPIQETV) are disordered. The segment covering 244–257 (SGDDTGAKVERADG) has biased composition (basic and acidic residues).

Belongs to the eukaryotic ribosomal protein eS1 family. As to quaternary structure, component of the small ribosomal subunit. Mature ribosomes consist of a small (40S) and a large (60S) subunit. The 40S subunit contains about 33 different proteins and 1 molecule of RNA (18S). The 60S subunit contains about 49 different proteins and 3 molecules of RNA (28S, 5.8S and 5S).

Its subcellular location is the cytoplasm. Functionally, component of the small ribosomal subunit. The ribosome is a large ribonucleoprotein complex responsible for the synthesis of proteins in the cell. This Oryzias latipes (Japanese rice fish) protein is Small ribosomal subunit protein eS1 (rps3a).